Reading from the N-terminus, the 471-residue chain is Putative multidrug resistance protein MdtD (471 aa).

Helical transmembrane passes span Leu12–Ala32, Met49–Ala69, Ile77–Thr97, Val102–Met124, Phe138–Val158, Trp165–Met185, Phe195–Asp215, Leu220–Leu240, Phe263–Met283, Val286–Met306, Val329–Gly351, Leu393–Leu413, and Val431–Ser451.

The protein belongs to the major facilitator superfamily. TCR/Tet family.

It localises to the cell inner membrane. This chain is Putative multidrug resistance protein MdtD, found in Klebsiella pneumoniae subsp. pneumoniae (strain ATCC 700721 / MGH 78578).